Consider the following 82-residue polypeptide: Cytochrome c oxidase-assembly factor cox-23, mitochondrial (82 aa).

Residues 1 to 27 form a disordered region; sequence MAQAGSENKEPWNEETRAKFEGKSRSE. Basic and acidic residues predominate over residues 7–27; it reads ENKEPWNEETRAKFEGKSRSE. Residues 29–71 enclose the CHCH domain; that stretch reads LDPCQEAAQRSIRCLHRNQGDRTMCSDYFEAYRECKKQWIERR. 2 consecutive short sequence motifs (cx9C motif) follow at residues 32-42 and 53-63; these read CQEAAQRSIRC and CSDYFEAYREC. Cystine bridges form between Cys32/Cys63 and Cys42/Cys53.

The protein belongs to the COX23 family.

The protein resides in the mitochondrion intermembrane space. Required for the assembly of cytochrome c oxidase. This is Cytochrome c oxidase-assembly factor cox-23, mitochondrial (cox-23) from Neurospora crassa (strain ATCC 24698 / 74-OR23-1A / CBS 708.71 / DSM 1257 / FGSC 987).